Reading from the N-terminus, the 517-residue chain is Dermokine (517 aa).

An N-terminal signal peptide occupies residues 1-21 (MKLQGSLACLLLALCLGGGAA). 2 disordered regions span residues 51–83 (VGQGAKEAASSGIQNALGQGHGEEGGSTLMGSR) and 123–364 (AGSW…IQKE). 2 stretches are compositionally biased toward gly residues: residues 127–145 (GTSGGHGAYGSQGGAGVQG) and 167–176 (GSVGQGGNGG). Residues 197–206 (RGNNQNSGCT) show a composition bias toward polar residues. Low complexity predominate over residues 212-235 (GSHESFSNSGGSSNDGSRGSQGSH). The segment covering 236 to 250 (GSNGQGSSGRGGGQG) has biased composition (gly residues). The span at 251–289 (NSDNNGSSSSSSGSNSGNSNSGNSGNSNSGNSGNSGSGS) shows a compositional bias: low complexity. Gly residues-rich tracts occupy residues 308–332 (GSRGGSGGSGGSGGSGGSGGSGGGN) and 347–358 (GGSGSQGHGSNG).

It belongs to the dermokine family. As to quaternary structure, homooligomer. Seems to be able to homodimerize and homotrimerize. O-glycosylated. As to expression, highly expressed in stratified epithelia; such as the skin, tongue, esophagus, forestomach and vagina. Also found in lung, trachea and urinary bladder.

The protein localises to the secreted. May act as a soluble regulator of keratinocyte differentiation. This is Dermokine (Dmkn) from Mus musculus (Mouse).